A 239-amino-acid chain; its full sequence is Lactate utilization protein A (239 aa).

It belongs to the LutA/YkgE family.

Is involved in L-lactate degradation and allows cells to grow with lactate as the sole carbon source. In Shouchella clausii (strain KSM-K16) (Alkalihalobacillus clausii), this protein is Lactate utilization protein A.